A 343-amino-acid polypeptide reads, in one-letter code: 3-dehydroquinate synthase (343 aa).

NAD(+) contacts are provided by residues 86–90, 110–111, K123, and K132; these read GALLD and TT. E165, H229, and H243 together coordinate Zn(2+).

This sequence belongs to the sugar phosphate cyclases superfamily. Dehydroquinate synthase family. Requires Co(2+) as cofactor. Zn(2+) is required as a cofactor. The cofactor is NAD(+).

It is found in the cytoplasm. The enzyme catalyses 7-phospho-2-dehydro-3-deoxy-D-arabino-heptonate = 3-dehydroquinate + phosphate. It functions in the pathway metabolic intermediate biosynthesis; chorismate biosynthesis; chorismate from D-erythrose 4-phosphate and phosphoenolpyruvate: step 2/7. Functionally, catalyzes the conversion of 3-deoxy-D-arabino-heptulosonate 7-phosphate (DAHP) to dehydroquinate (DHQ). The protein is 3-dehydroquinate synthase of Pyrobaculum neutrophilum (strain DSM 2338 / JCM 9278 / NBRC 100436 / V24Sta) (Thermoproteus neutrophilus).